Reading from the N-terminus, the 447-residue chain is Glutamate--tRNA ligase 1 (447 aa).

Residues 10 to 20 (PSPTGMLHVGN) carry the 'HIGH' region motif. The short motif at 240-244 (KISKR) is the 'KMSKS' region element. ATP is bound at residue K243.

It belongs to the class-I aminoacyl-tRNA synthetase family. Glutamate--tRNA ligase type 1 subfamily. In terms of assembly, monomer.

It is found in the cytoplasm. The catalysed reaction is tRNA(Glu) + L-glutamate + ATP = L-glutamyl-tRNA(Glu) + AMP + diphosphate. In terms of biological role, catalyzes the attachment of glutamate to tRNA(Glu) in a two-step reaction: glutamate is first activated by ATP to form Glu-AMP and then transferred to the acceptor end of tRNA(Glu). This Rickettsia rickettsii (strain Sheila Smith) protein is Glutamate--tRNA ligase 1.